The chain runs to 216 residues: Large ribosomal subunit protein uL3 (216 aa).

Q153 is modified (N5-methylglutamine).

This sequence belongs to the universal ribosomal protein uL3 family. Part of the 50S ribosomal subunit. Forms a cluster with proteins L14 and L19. Methylated by PrmB.

In terms of biological role, one of the primary rRNA binding proteins, it binds directly near the 3'-end of the 23S rRNA, where it nucleates assembly of the 50S subunit. The sequence is that of Large ribosomal subunit protein uL3 from Burkholderia multivorans (strain ATCC 17616 / 249).